The following is a 365-amino-acid chain: Geranylgeranyl pyrophosphate synthase (365 aa).

The segment covering 1–11 (MKPLPSTNGKV) has biased composition (polar residues). The interval 1 to 36 (MKPLPSTNGKVNGNGKHHDSSLSSTSSTSSSSSSDT) is disordered. The segment covering 21–34 (SLSSTSSTSSSSSS) has biased composition (low complexity). Residues Lys78, Arg81, and His110 each contribute to the isopentenyl diphosphate site. Asp117 and Asp121 together coordinate Mg(2+). Arg126 lines the dimethylallyl diphosphate pocket. Residue Arg127 coordinates isopentenyl diphosphate. Residues Lys211, Thr212, and Gln247 each contribute to the dimethylallyl diphosphate site. Mg(2+) is bound at residue Asp250. The dimethylallyl diphosphate site is built by Asn254, Lys263, and Lys273.

This sequence belongs to the FPP/GGPP synthase family. Mg(2+) is required as a cofactor.

It catalyses the reaction isopentenyl diphosphate + dimethylallyl diphosphate = (2E)-geranyl diphosphate + diphosphate. The enzyme catalyses isopentenyl diphosphate + (2E)-geranyl diphosphate = (2E,6E)-farnesyl diphosphate + diphosphate. The catalysed reaction is isopentenyl diphosphate + (2E,6E)-farnesyl diphosphate = (2E,6E,10E)-geranylgeranyl diphosphate + diphosphate. In terms of biological role, geranylgeranyl pyrophosphate synthase that catalyzes the trans-addition of the three molecules of IPP onto DMAPP to form geranylgeranyl pyrophosphate. Does not show any monoterpene nor sesquiterpene synthase activity. The chain is Geranylgeranyl pyrophosphate synthase from Melampsora lini (Rust fungus).